The chain runs to 340 residues: Phosphate acyltransferase (340 aa).

The protein belongs to the PlsX family. In terms of assembly, homodimer. Probably interacts with PlsY.

Its subcellular location is the cytoplasm. It catalyses the reaction a fatty acyl-[ACP] + phosphate = an acyl phosphate + holo-[ACP]. The protein operates within lipid metabolism; phospholipid metabolism. Catalyzes the reversible formation of acyl-phosphate (acyl-PO(4)) from acyl-[acyl-carrier-protein] (acyl-ACP). This enzyme utilizes acyl-ACP as fatty acyl donor, but not acyl-CoA. This Trichodesmium erythraeum (strain IMS101) protein is Phosphate acyltransferase.